Reading from the N-terminus, the 397-residue chain is Proteasome-activating nucleotidase (397 aa).

Positions 12 to 58 (GYEDYITFLKRRIRQLELQVRTLEADKERLERELSRLRTEMSRLRQP) form a coiled coil. ATP is bound by residues 182-187 (GCGKTL) and His321. The docks into pockets in the proteasome alpha-ring to cause gate opening stretch occupies residues 395-397 (MYG).

Belongs to the AAA ATPase family. In terms of assembly, homohexamer. The hexameric complex has a two-ring architecture resembling a top hat that caps the 20S proteasome core at one or both ends. Upon ATP-binding, the C-terminus of PAN interacts with the alpha-rings of the proteasome core by binding to the intersubunit pockets.

Its subcellular location is the cytoplasm. Functionally, ATPase which is responsible for recognizing, binding, unfolding and translocation of substrate proteins into the archaeal 20S proteasome core particle. Is essential for opening the gate of the 20S proteasome via an interaction with its C-terminus, thereby allowing substrate entry and access to the site of proteolysis. Thus, the C-termini of the proteasomal ATPase function like a 'key in a lock' to induce gate opening and therefore regulate proteolysis. Unfolding activity requires energy from ATP hydrolysis, whereas ATP binding alone promotes ATPase-20S proteasome association which triggers gate opening, and supports translocation of unfolded substrates. The protein is Proteasome-activating nucleotidase of Thermococcus gammatolerans (strain DSM 15229 / JCM 11827 / EJ3).